The following is a 1316-amino-acid chain: DNA-directed RNA polymerase subunit beta' (1316 aa).

4 residues coordinate Zn(2+): C60, C62, C75, and C78. Mg(2+)-binding residues include D535, D537, and D539. The Zn(2+) site is built by C891, C968, C975, and C978.

The protein belongs to the RNA polymerase beta' chain family. In terms of assembly, the RNAP catalytic core consists of 2 alpha, 1 beta, 1 beta' and 1 omega subunit. When a sigma factor is associated with the core the holoenzyme is formed, which can initiate transcription. Requires Mg(2+) as cofactor. Zn(2+) is required as a cofactor.

It carries out the reaction RNA(n) + a ribonucleoside 5'-triphosphate = RNA(n+1) + diphosphate. DNA-dependent RNA polymerase catalyzes the transcription of DNA into RNA using the four ribonucleoside triphosphates as substrates. The chain is DNA-directed RNA polymerase subunit beta' from Mycobacterium leprae (strain Br4923).